The following is a 405-amino-acid chain: Serpin I2 (405 aa).

The first 18 residues, 1 to 18, serve as a signal peptide directing secretion; sequence MDTIFLWSLLLLFFGSQA. 3 N-linked (GlcNAc...) asparagine glycosylation sites follow: Asn-202, Asn-207, and Asn-306.

Belongs to the serpin family. As to expression, expressed in pancreas and adipose tissues.

It is found in the secreted. In Homo sapiens (Human), this protein is Serpin I2 (SERPINI2).